Consider the following 225-residue polypeptide: UPF0758 protein XC_3944 (225 aa).

The region spanning 102-224 (ALSDPSSVGR…PVSLAERGWV (123 aa)) is the MPN domain. Zn(2+) contacts are provided by H173, H175, and D186. The JAMM motif motif lies at 173–186 (HNHPSGNPEPSEAD).

This sequence belongs to the UPF0758 family.

The protein is UPF0758 protein XC_3944 of Xanthomonas campestris pv. campestris (strain 8004).